A 924-amino-acid chain; its full sequence is Mediator of RNA polymerase II transcription subunit 16 (924 aa).

Belongs to the Mediator complex subunit 16 family. As to quaternary structure, component of the Mediator complex.

It localises to the nucleus. Functionally, component of the Mediator complex, a coactivator involved in the regulated transcription of nearly all RNA polymerase II-dependent genes. Mediator functions as a bridge to convey information from gene-specific regulatory proteins to the basal RNA polymerase II transcription machinery. Mediator is recruited to promoters by direct interactions with regulatory proteins and serves as a scaffold for the assembly of a functional preinitiation complex with RNA polymerase II and the general transcription factors. The sequence is that of Mediator of RNA polymerase II transcription subunit 16 (SIN4) from Yarrowia lipolytica (strain CLIB 122 / E 150) (Yeast).